The sequence spans 217 residues: MKFFLDTAFVEEIRAAKEWGILDGVTTNPTLVAKTGKGFMEVVQDILNIVEGPVSIEVVAQDAQGMVEQAQQLRRLGEQVVIKIPATQEGIKAVKVLSQEGIPTNVTLIFQPLQALLAAKAGATYVSPFVGRLEDIGHDAMDLVFDIKNIFDNYGFETQIIVASIRHPKHVLDAARMGADICTVPFKVMEQLFKHALTDRGLEQFLADWSKVPGRPF.

Catalysis depends on Lys83, which acts as the Schiff-base intermediate with substrate.

This sequence belongs to the transaldolase family. Type 3B subfamily.

The protein localises to the cytoplasm. It carries out the reaction D-sedoheptulose 7-phosphate + D-glyceraldehyde 3-phosphate = D-erythrose 4-phosphate + beta-D-fructose 6-phosphate. Its pathway is carbohydrate degradation; pentose phosphate pathway; D-glyceraldehyde 3-phosphate and beta-D-fructose 6-phosphate from D-ribose 5-phosphate and D-xylulose 5-phosphate (non-oxidative stage): step 2/3. Transaldolase is important for the balance of metabolites in the pentose-phosphate pathway. The sequence is that of Probable transaldolase from Coprothermobacter proteolyticus (strain ATCC 35245 / DSM 5265 / OCM 4 / BT).